A 975-amino-acid chain; its full sequence is MSNPKVFEFAKEIGMTPLALMDKIREWHLPVKSHMAELEPEVLEQIKIKLSGGEKSGDEAKPKKTAARKAAPKKAAVAAPVPEADASSAAAKTPVIRRKKDEVPAEAPKAKVVAKPEGEVEEAAAAPKTTRVVVKKPAVKAEAEEVEETPEVEAAAPVEEKAPVKAAVKEEAPAPVEKPEPVVAKEVPAAPVAAAPEAPAPQARKKEVVVGTSGVSSSATPASAPKRNIIGRMDLSRVQSQAPQRPQGERPAGGFTPRAGGEQRGASASFTGQRPGGFNRPAGGAPTRNIRTGFVAANQPPEPIVETGADRGGRDFDKRKRTFGPSAPAAGPAAAGRGAGEKEEVVVSFNAVEFRKREMVFQPKKKKGLLDRDAMKTQITTPSAHKRVVKVNNTMKLSDLAMEMGLKAPQLVRELMKQGVMANMNMDLDFDTIALIVPEFGWEAQNVFKTADEVAEQTAFGDLDAAPVTRPPVVTVMGHVDHGKTSLLDAIRNADVAKGEAGGITQHIGAYSVKIEDGSLITFLDTPGHEAFTAMRARGANATDIAIIVVAADDGMMPQTQEAINHAKAAGVPIIVAVNKIDKPGANPERIKQQLTELEIVPEEWGGSTIFCEVSALKKTGITELLEQIKLVAEVAELKANPKRSGTGLVIEAKMEKGKGPVATLLVKDGTVEVGQYIVAGTMKGRVRSLTNDRGERVQSAGPGIPVEVLGLEAVPAAGDKFDIVKDEVTATKVSELRKEQAEKAAATPAAKLSLDEVFAKVKAGDVKELAIVLKADVHGSLEAINGMLAKLSTPEVKARVIHSAVGGINEGDIVLANTAKGIVLGFNVRPDLGAQAKAKQMGVDVRTYSIVYELIDQMKAAMGGLLSPDIVEEVLGRAEVRNVFTVPKVGTIAGCFVIDGKVQRNASIRLLRENKIVYEGKIASLKRFKDDAKEVASGYECGIGIENYNDVKVGDQMEAFVKKEVARELEGGAN.

Disordered stretches follow at residues 49-110 and 193-339; these read KLSG…APKA and AAAP…GRGA. Basic residues predominate over residues 63-72; that stretch reads KKTAARKAAP. Low complexity-rich tracts occupy residues 73–94, 193–202, and 209–225; these read KKAA…AKTP, AAAPEAPAPQ, and VVGT…ASAP. The segment covering 308 to 318 has biased composition (basic and acidic residues); it reads GADRGGRDFDK. The segment covering 324–336 has biased composition (low complexity); it reads GPSAPAAGPAAAG. A tr-type G domain is found at 469–639; the sequence is TRPPVVTVMG…KLVAEVAELK (171 aa). The G1 stretch occupies residues 478–485; it reads GHVDHGKT. 478–485 lines the GTP pocket; the sequence is GHVDHGKT. The interval 503 to 507 is G2; the sequence is GITQH. A G3 region spans residues 525–528; sequence DTPG. Residues 525–529 and 579–582 contribute to the GTP site; these read DTPGH and NKID. The G4 stretch occupies residues 579-582; that stretch reads NKID. Positions 615–617 are G5; that stretch reads SAL.

The protein belongs to the TRAFAC class translation factor GTPase superfamily. Classic translation factor GTPase family. IF-2 subfamily.

It localises to the cytoplasm. One of the essential components for the initiation of protein synthesis. Protects formylmethionyl-tRNA from spontaneous hydrolysis and promotes its binding to the 30S ribosomal subunits. Also involved in the hydrolysis of GTP during the formation of the 70S ribosomal complex. In Bdellovibrio bacteriovorus (strain ATCC 15356 / DSM 50701 / NCIMB 9529 / HD100), this protein is Translation initiation factor IF-2.